Reading from the N-terminus, the 319-residue chain is MAIKRTKAEKKVAYDKKLCQLLDEYTKVLIAVADNVGSNQLQEIRKGLRGDSIVLMGKNTLIRRCIKVHADNTGNKEFLELMPLLVGNVGLIFTKGDLKEVREEVAKYKVGAPARVGLVAPVDVVVPPGNTGLDPSQTSFFQVLNIPTKINKGTVEIITPVELIKKGDKVGSSESALLAKLGIRPFSYGLVITNVYDSGSVFSPEVLDLTEDDLMEKFASGVSMVASVSLAISYPTIAAAPHMFLNGYKNVLAVAVETEYSYPHADKIKEYLKDPSKFAVAAPVAADSGAAAPSAAKEEEKKEEPEEESDGDLGMSLFD.

The segment covering 286–295 (ADSGAAAPSA) has biased composition (low complexity). The interval 286–319 (ADSGAAAPSAAKEEEKKEEPEEESDGDLGMSLFD) is disordered.

The protein belongs to the universal ribosomal protein uL10 family. P0 forms a pentameric complex by interaction with dimers of P1 and P2. Interacts with NSF. Post-translationally, phosphorylated. As to expression, highly expressed in stems, inflorescences and immature seeds (at protein level). Expressed in leaves and mature seeds (at protein level).

Its function is as follows. Ribosomal protein P0 is the functional equivalent of E.coli protein L10. This is Large ribosomal subunit protein uL10 from Oryza sativa subsp. japonica (Rice).